Here is an 836-residue protein sequence, read N- to C-terminus: Homeobox-leucine zipper protein ATHB-15 (836 aa).

The segment at residues 14-77 (DNGKYVRYTP…NRRCREKQRK (64 aa)) is a DNA-binding region (homeobox). The stretch at 72 to 115 (REKQRKEASRLQAVNRKLTAMNKLLMEENDRLQKQVSQLVHENS) forms a coiled coil. Residues 151 to 379 (RDASPAGLLS…IAQEVTQTNS (229 aa)) form the START domain.

Belongs to the HD-ZIP homeobox family. Class III subfamily. As to quaternary structure, interacts with ESR1 and ESR2. Interacts with ZPR3. In terms of tissue distribution, highly expressed the developing vascular elements and the adaxial portion of cotyledons. Expressed in developing ovules, stamens and carpels. Expressed in procambium and shoot meristem.

The protein resides in the nucleus. Functionally, probable transcription factor involved in the regulation of meristem development to promote lateral organ formation. May regulates procambial and vascular tissue formation or maintenance, and vascular development in inflorescence stems. In Arabidopsis thaliana (Mouse-ear cress), this protein is Homeobox-leucine zipper protein ATHB-15 (ATHB-15).